Here is a 178-residue protein sequence, read N- to C-terminus: Killin (178 aa).

Residues 8–50 (SARPGRTVHVWGYRVEWKVRNGRKLQPSEWAGRGDLGGFKRRW) mediate DNA binding.

The protein resides in the nucleus. Functionally, DNA-binding protein involved in S phase checkpoint control-coupled apoptosis by mediating p53/TP53-induced apoptosis. Has the ability to inhibit DNA synthesis and S phase arrest coupled to apoptosis. Has affinity to both double- and single-stranded DNA. This is Killin (KLLN) from Homo sapiens (Human).